A 173-amino-acid polypeptide reads, in one-letter code: Mesencephalic astrocyte-derived neurotrophic factor homolog (173 aa).

The signal sequence occupies residues 1–22; that stretch reads MNTSHIVLMICFIVGVGQTALA. Cystine bridges form between cysteine 28/cysteine 114, cysteine 31/cysteine 103, cysteine 61/cysteine 72, and cysteine 148/cysteine 151.

This sequence belongs to the ARMET family.

The protein localises to the secreted. Required during the maturation of the embryonic nervous system for maintenance of neuronal and cuticular connectivity. Essential for maintenance of dopaminergic neurons and dopamine levels. The protein is Mesencephalic astrocyte-derived neurotrophic factor homolog of Drosophila virilis (Fruit fly).